The following is a 154-amino-acid chain: Ribosome maturation factor RimP (154 aa).

This sequence belongs to the RimP family.

The protein localises to the cytoplasm. Functionally, required for maturation of 30S ribosomal subunits. The sequence is that of Ribosome maturation factor RimP from Deinococcus deserti (strain DSM 17065 / CIP 109153 / LMG 22923 / VCD115).